Reading from the N-terminus, the 269-residue chain is Putative phosphoenolpyruvate synthase regulatory protein (269 aa).

Residue glycine 149–threonine 156 participates in ADP binding.

This sequence belongs to the pyruvate, phosphate/water dikinase regulatory protein family. PSRP subfamily.

It catalyses the reaction [pyruvate, water dikinase] + ADP = [pyruvate, water dikinase]-phosphate + AMP + H(+). The catalysed reaction is [pyruvate, water dikinase]-phosphate + phosphate + H(+) = [pyruvate, water dikinase] + diphosphate. Functionally, bifunctional serine/threonine kinase and phosphorylase involved in the regulation of the phosphoenolpyruvate synthase (PEPS) by catalyzing its phosphorylation/dephosphorylation. In Colwellia psychrerythraea (strain 34H / ATCC BAA-681) (Vibrio psychroerythus), this protein is Putative phosphoenolpyruvate synthase regulatory protein.